The chain runs to 328 residues: Sialic acid-binding Ig-like lectin 15 (328 aa).

The first 19 residues, 1-19 (MEKSIWLLACLAWVLPTGS), serve as a signal peptide directing secretion. Topologically, residues 20 to 263 (FVRTKIDTTE…RFHGASGAST (244 aa)) are extracellular. Residues 40–158 (PAQRWSMQVP…DVHDRYESRH (119 aa)) enclose the Ig-like V-type domain. 2 disulfides stabilise this stretch: Cys-64–Cys-142 and Cys-95–Cys-104. Arg-143 is an N-acetylneuraminate binding site. One can recognise an Ig-like C2-type domain in the interval 168-251 (PRIVNISVLP…SLGRSEASVY (84 aa)). N-linked (GlcNAc...) asparagine glycosylation occurs at Asn-172. Cysteines 187 and 237 form a disulfide. A helical transmembrane segment spans residues 264-284 (VALLLGALGFKALLLLGVLAA). Residues 285-328 (RAARRRPEHLDTPDTPPRSQAQESNYENLSQMNPRSPPATMCSP) are Cytoplasmic-facing. Residues 289–328 (RRPEHLDTPDTPPRSQAQESNYENLSQMNPRSPPATMCSP) form a disordered region. The span at 301 to 318 (PRSQAQESNYENLSQMNP) shows a compositional bias: polar residues.

This sequence belongs to the immunoglobulin superfamily. SIGLEC (sialic acid binding Ig-like lectin) family. Interacts with TYROBP and HCST. In terms of tissue distribution, expressed in macrophage and/or dendritic cells of spleen and lymph nodes.

The protein resides in the membrane. Binds sialylated glycoproteins. This Homo sapiens (Human) protein is Sialic acid-binding Ig-like lectin 15 (SIGLEC15).